Here is a 767-residue protein sequence, read N- to C-terminus: Glucoamylase S1 (767 aa).

An N-terminal signal peptide occupies residues 1-21 (MQRPFLLAYLVLSLLFNSALG). 2 disordered regions span residues 29-83 (RGSS…ETTI) and 125-149 (TTTV…PTTP). The span at 30 to 48 (GSSSSNITSSGPSSTPFSS) shows a compositional bias: low complexity. Residue N35 is glycosylated (N-linked (GlcNAc...) asparagine). Residues 49–66 (ATESFSTGTTVTPSSSKY) are compositionally biased toward polar residues. Composition is skewed to low complexity over residues 71–83 (TETS…ETTI) and 131–149 (STSP…PTTP). N-linked (GlcNAc...) asparagine glycans are attached at residues N308, N322, N414, N423, and N434. The tract at residues 348-691 (VSIERIFENI…ASTTLYQLIY (344 aa)) is h subunit. W455 lines the substrate pocket. N-linked (GlcNAc...) asparagine glycosylation is present at N513. The active-site Proton acceptor is the D518. The active-site Proton donor is the E521. 5 N-linked (GlcNAc...) asparagine glycosylation sites follow: N546, N645, N650, N720, and N741. The segment at 692-767 (RHISEQHDLV…LKATWEQTGN (76 aa)) is y subunit.

Belongs to the glycosyl hydrolase 15 family.

The catalysed reaction is Hydrolysis of terminal (1-&gt;4)-linked alpha-D-glucose residues successively from non-reducing ends of the chains with release of beta-D-glucose.. This chain is Glucoamylase S1 (STA1), found in Saccharomyces cerevisiae (Baker's yeast).